The following is a 129-amino-acid chain: Small ribosomal subunit protein uS9 (129 aa).

This sequence belongs to the universal ribosomal protein uS9 family.

The sequence is that of Small ribosomal subunit protein uS9 from Chlorobium phaeobacteroides (strain DSM 266 / SMG 266 / 2430).